The primary structure comprises 149 residues: Putative pre-16S rRNA nuclease (149 aa).

It belongs to the YqgF nuclease family.

It is found in the cytoplasm. Functionally, could be a nuclease involved in processing of the 5'-end of pre-16S rRNA. The chain is Putative pre-16S rRNA nuclease from Burkholderia multivorans (strain ATCC 17616 / 249).